We begin with the raw amino-acid sequence, 1025 residues long: Multidrug resistance protein MdtC (1025 aa).

The next 12 membrane-spanning stretches (helical) occupy residues 3–23 (FFAL…AITL), 333–353 (EVEQ…FLFL), 360–380 (LIPA…MYLC), 387–407 (LSLM…IVVL), 431–451 (VGFT…PLLL), 463–483 (FAVT…TLTP), 528–548 (IVGL…ITIP), 853–873 (VILI…LYES), 875–895 (VHPL…LLAL), 897–917 (LFDA…IGIV), 953–973 (PIMM…ISSG), and 984–1004 (ITIV…TPVV).

It belongs to the resistance-nodulation-cell division (RND) (TC 2.A.6) family. MdtC subfamily. As to quaternary structure, part of a tripartite efflux system composed of MdtA, MdtB and MdtC. MdtC forms a heteromultimer with MdtB.

The protein resides in the cell inner membrane. The protein is Multidrug resistance protein MdtC of Enterobacter sp. (strain 638).